Consider the following 123-residue polypeptide: Small ribosomal subunit protein uS12 (123 aa).

The residue at position 89 (aspartate 89) is a 3-methylthioaspartic acid.

It belongs to the universal ribosomal protein uS12 family. As to quaternary structure, part of the 30S ribosomal subunit. Contacts proteins S8 and S17. May interact with IF1 in the 30S initiation complex.

Its function is as follows. With S4 and S5 plays an important role in translational accuracy. Functionally, interacts with and stabilizes bases of the 16S rRNA that are involved in tRNA selection in the A site and with the mRNA backbone. Located at the interface of the 30S and 50S subunits, it traverses the body of the 30S subunit contacting proteins on the other side and probably holding the rRNA structure together. The combined cluster of proteins S8, S12 and S17 appears to hold together the shoulder and platform of the 30S subunit. This Methylobacterium radiotolerans (strain ATCC 27329 / DSM 1819 / JCM 2831 / NBRC 15690 / NCIMB 10815 / 0-1) protein is Small ribosomal subunit protein uS12.